The chain runs to 472 residues: 3-isopropylmalate dehydratase large subunit (472 aa).

[4Fe-4S] cluster contacts are provided by cysteine 347, cysteine 409, and cysteine 412.

This sequence belongs to the aconitase/IPM isomerase family. LeuC type 1 subfamily. In terms of assembly, heterodimer of LeuC and LeuD. The cofactor is [4Fe-4S] cluster.

It catalyses the reaction (2R,3S)-3-isopropylmalate = (2S)-2-isopropylmalate. Its pathway is amino-acid biosynthesis; L-leucine biosynthesis; L-leucine from 3-methyl-2-oxobutanoate: step 2/4. In terms of biological role, catalyzes the isomerization between 2-isopropylmalate and 3-isopropylmalate, via the formation of 2-isopropylmaleate. The chain is 3-isopropylmalate dehydratase large subunit from Salinibacter ruber (strain DSM 13855 / M31).